Consider the following 106-residue polypeptide: UPF0145 protein Dhaf_3855 (106 aa).

It belongs to the UPF0145 family.

This Desulfitobacterium hafniense (strain DSM 10664 / DCB-2) protein is UPF0145 protein Dhaf_3855.